The sequence spans 125 residues: Small ribosomal subunit protein uS12c (125 aa).

It belongs to the universal ribosomal protein uS12 family. As to quaternary structure, part of the 30S ribosomal subunit.

The protein localises to the plastid. It localises to the chloroplast. With S4 and S5 plays an important role in translational accuracy. Located at the interface of the 30S and 50S subunits. This Oltmannsiellopsis viridis (Marine flagellate) protein is Small ribosomal subunit protein uS12c (rps12).